The sequence spans 130 residues: Small ribosomal subunit protein uS8 (130 aa).

It belongs to the universal ribosomal protein uS8 family. Part of the 30S ribosomal subunit. Contacts proteins S5 and S12.

Its function is as follows. One of the primary rRNA binding proteins, it binds directly to 16S rRNA central domain where it helps coordinate assembly of the platform of the 30S subunit. In Vibrio campbellii (strain ATCC BAA-1116), this protein is Small ribosomal subunit protein uS8.